A 430-amino-acid chain; its full sequence is Adenylosuccinate synthetase (430 aa).

GTP is bound by residues 12–18 and 40–42; these read GDEGKGK and GHT. Residue aspartate 13 is the Proton acceptor of the active site. The Mg(2+) site is built by aspartate 13 and glycine 40. IMP contacts are provided by residues 13 to 16, 38 to 41, threonine 128, arginine 142, glutamine 223, threonine 238, and arginine 302; these read DEGK and NAGH. Histidine 41 acts as the Proton donor in catalysis. 298–304 provides a ligand contact to substrate; it reads TTTGRPR. GTP is bound by residues arginine 304, 330 to 332, and 412 to 414; these read LLD and SVG.

This sequence belongs to the adenylosuccinate synthetase family. Homodimer. Mg(2+) is required as a cofactor.

Its subcellular location is the cytoplasm. It carries out the reaction IMP + L-aspartate + GTP = N(6)-(1,2-dicarboxyethyl)-AMP + GDP + phosphate + 2 H(+). It functions in the pathway purine metabolism; AMP biosynthesis via de novo pathway; AMP from IMP: step 1/2. Functionally, plays an important role in the de novo pathway of purine nucleotide biosynthesis. Catalyzes the first committed step in the biosynthesis of AMP from IMP. This is Adenylosuccinate synthetase from Listeria welshimeri serovar 6b (strain ATCC 35897 / DSM 20650 / CCUG 15529 / CIP 8149 / NCTC 11857 / SLCC 5334 / V8).